The following is a 275-amino-acid chain: Calcium-binding protein 4 (275 aa).

The segment covering methionine 1–proline 12 has biased composition (polar residues). Residues methionine 1–tyrosine 112 form a disordered region. The span at threonine 38 to threonine 55 shows a compositional bias: basic residues. At serine 42 the chain carries Phosphoserine. EF-hand domains lie at glutamate 129–methionine 164, glycine 183–glutamate 200, leucine 206–glutamate 241, and leucine 243–histidine 275. Ca(2+) is bound by residues aspartate 142, aspartate 144, aspartate 146, tyrosine 148, and glutamate 153. 10 residues coordinate Ca(2+): aspartate 219, aspartate 221, aspartate 223, arginine 225, glutamate 230, aspartate 256, asparagine 258, aspartate 260, threonine 262, and glutamate 267.

As to quaternary structure, interacts with CACNA1F and CACNA1D (via IQ domain) in a calcium independent manner. Interacts (via N-terminus) with UNC119. Phosphorylated. Phosphorylation levels change with the light conditions and regulate the activity. Expressed in retina and in the inner hair cells (IHC) of the cochlea.

The protein resides in the cytoplasm. It is found in the presynapse. Its function is as follows. Involved in normal synaptic function through regulation of Ca(2+) influx and neurotransmitter release in photoreceptor synaptic terminals and in auditory transmission. Modulator of CACNA1D and CACNA1F, suppressing the calcium-dependent inactivation and shifting the activation range to more hyperpolarized voltages. The sequence is that of Calcium-binding protein 4 (CABP4) from Homo sapiens (Human).